Consider the following 264-residue polypeptide: Glutamate racemase (264 aa).

Substrate contacts are provided by residues 10 to 11 (DS) and 42 to 43 (YG). Catalysis depends on Cys73, which acts as the Proton donor/acceptor. Substrate is bound at residue 74–75 (NT). Catalysis depends on Cys183, which acts as the Proton donor/acceptor. Residue 184-185 (TH) participates in substrate binding.

It belongs to the aspartate/glutamate racemases family.

It catalyses the reaction L-glutamate = D-glutamate. It participates in cell wall biogenesis; peptidoglycan biosynthesis. Functionally, provides the (R)-glutamate required for cell wall biosynthesis. The protein is Glutamate racemase of Streptococcus pyogenes serotype M2 (strain MGAS10270).